We begin with the raw amino-acid sequence, 447 residues long: Glutamate-1-semialdehyde 2,1-aminomutase (447 aa).

Position 272 is an N6-(pyridoxal phosphate)lysine (K272).

The protein belongs to the class-III pyridoxal-phosphate-dependent aminotransferase family. HemL subfamily. As to quaternary structure, homodimer. Requires pyridoxal 5'-phosphate as cofactor.

Its subcellular location is the cytoplasm. The enzyme catalyses (S)-4-amino-5-oxopentanoate = 5-aminolevulinate. It participates in porphyrin-containing compound metabolism; protoporphyrin-IX biosynthesis; 5-aminolevulinate from L-glutamyl-tRNA(Glu): step 2/2. In Leifsonia xyli subsp. xyli (strain CTCB07), this protein is Glutamate-1-semialdehyde 2,1-aminomutase.